A 437-amino-acid chain; its full sequence is Nuclear distribution protein PAC1 (437 aa).

Positions 64 to 94 (LSVIRLQRKVMDLETRLEAAEREASSTHKAN) form a coiled coil. WD repeat units lie at residues 114–153 (LHKQ…IETT), 156–217 (AHTR…ANVK), 221–260 (GHDH…CVRT), 263–301 (GHTD…GKMT), 304–356 (GHEH…LLIL), 358–397 (GHDN…RCIR), and 401–437 (AHGH…KVWQ). The disordered stretch occupies residues 165–186 (DFSQPDTGASRDKSHDKPRADV). Over residues 173-186 (ASRDKSHDKPRADV) the composition is skewed to basic and acidic residues.

It belongs to the WD repeat LIS1/nudF family. In terms of assembly, self-associates. Interacts with NDL1 and dynein.

The protein localises to the cytoplasm. Its subcellular location is the cytoskeleton. It is found in the spindle pole. Its function is as follows. Positively regulates the activity of the minus-end directed microtubule motor protein dynein. Plays a central role in positioning the mitotic spindle at the bud neck during cell division. Targets cytoplasmic dynein to microtubule plus ends, thereby promoting dynein-mediated microtubule sliding along the bud cortex and consequently the movement of the mitotic spindle to the bud neck. The sequence is that of Nuclear distribution protein PAC1 from Yarrowia lipolytica (strain CLIB 122 / E 150) (Yeast).